The sequence spans 191 residues: Orotate phosphoribosyltransferase (191 aa).

Position 114 to 122 (114 to 122) interacts with 5-phospho-alpha-D-ribose 1-diphosphate; it reads EDVVTTGKS. Residues Thr118 and Arg146 each contribute to the orotate site.

The protein belongs to the purine/pyrimidine phosphoribosyltransferase family. PyrE subfamily. As to quaternary structure, homodimer. Requires Mg(2+) as cofactor.

It catalyses the reaction orotidine 5'-phosphate + diphosphate = orotate + 5-phospho-alpha-D-ribose 1-diphosphate. The protein operates within pyrimidine metabolism; UMP biosynthesis via de novo pathway; UMP from orotate: step 1/2. In terms of biological role, catalyzes the transfer of a ribosyl phosphate group from 5-phosphoribose 1-diphosphate to orotate, leading to the formation of orotidine monophosphate (OMP). The polypeptide is Orotate phosphoribosyltransferase (Clostridium botulinum (strain Loch Maree / Type A3)).